Reading from the N-terminus, the 1361-residue chain is Cell migration-inducing and hyaluronan-binding protein (1361 aa).

The N-terminal stretch at 1–30 (MGAAGRQDFLFKAMLTISWLTLTCFPGATS) is a signal peptide. In terms of domain architecture, G8 spans 44–166 (QPWNPGHDQD…KKLSWTFLNK (123 aa)). Residues Asn119, Asn165, Asn312, Asn370, and Asn420 are each glycosylated (N-linked (GlcNAc...) asparagine). The GG-type lectin 1 domain occupies 176–317 (GGYFFERSWG…GEYFNVSLSS (142 aa)). Residues 295–591 (AAARVFKLFQ…IHHTFSRCVT (297 aa)) form a necessary for its endoplasmic reticulum (ER) retention and interaction with HSPA5 region. 4 PbH1 repeats span residues 572-594 (DPPT…TVHG), 595-617 (SNGL…FTED), 719-741 (IPLG…IIDN), and 798-819 (GGDV…TLAS). N-linked (GlcNAc...) asparagine glycosylation is found at Asn889 and Asn921. The GG-type lectin 2 domain occupies 1227–1361 (NDFAYIEVDG…PIPVVKKKKL (135 aa)).

It belongs to the CEMIP family. Interacts with EPHA2 and ITPR3. Interacts with HSPA5/BIP; the interaction induces calcium leakage from the endoplasmic reticulum and cell migration. Interacts with clathrin heavy chain/CLTC. In terms of processing, N-glycosylated; glycosylation is not necessary for HA-binding. In terms of tissue distribution, expressed in dermal and in synovial fibroblasts. Strongly expressed in gastric cancers compared with the paired normal tissues. Strongly expressed in both ductal carcinoma and invasive breast cancer cells compared with benign epithelial cells (at protein level). Strongly expressed in brain, placenta, prostate, breast, lung and testis. Expressed in fibroblasts, epithelial cells and cancer cells. In ear, it is specifically expressed in inner ear. Expressed in cochlea and vestibule tissues. Strongly expressed in gastric cancers compared with the paired normal tissues. Strongly expressed in colon adenocarcinomas compared with normal colonic mucosas. Strongly expressed in breast cancer as compared to normal breast tissue.

Its subcellular location is the nucleus. The protein resides in the cytoplasm. The protein localises to the endoplasmic reticulum. It localises to the cell membrane. It is found in the membrane. Its subcellular location is the clathrin-coated pit. The protein resides in the secreted. The enzyme catalyses Random hydrolysis of (1-&gt;4)-linkages between N-acetyl-beta-D-glucosamine and D-glucuronate residues in hyaluronate.. Activity is up-regulated by histamine. Its function is as follows. Mediates depolymerization of hyaluronic acid (HA) via the cell membrane-associated clathrin-coated pit endocytic pathway. Binds to hyaluronic acid. Hydrolyzes high molecular weight hyaluronic acid to produce an intermediate-sized product, a process that may occur through rapid vesicle endocytosis and recycling without intracytoplasmic accumulation or digestion in lysosomes. Involved in hyaluronan catabolism in the dermis of the skin and arthritic synovium. Positively regulates epithelial-mesenchymal transition (EMT), and hence tumor cell growth, invasion and cancer dissemination. In collaboration with HSPA5/BIP, promotes cancer cell migration in a calcium and PKC-dependent manner. May be involved in hearing. The sequence is that of Cell migration-inducing and hyaluronan-binding protein from Homo sapiens (Human).